The primary structure comprises 152 residues: Arginine repressor (152 aa).

The protein belongs to the ArgR family.

The protein localises to the cytoplasm. Its pathway is amino-acid biosynthesis; L-arginine biosynthesis [regulation]. In terms of biological role, regulates arginine biosynthesis genes. The sequence is that of Arginine repressor from Lactiplantibacillus plantarum (strain ATCC BAA-793 / NCIMB 8826 / WCFS1) (Lactobacillus plantarum).